The chain runs to 168 residues: Acetolactate synthase small subunit (168 aa).

The 76-residue stretch at 7–82 folds into the ACT domain; it reads TLSVLVEDKP…VIKIVEQDDE (76 aa).

The protein belongs to the acetolactate synthase small subunit family. As to quaternary structure, dimer of large and small chains.

The enzyme catalyses 2 pyruvate + H(+) = (2S)-2-acetolactate + CO2. It participates in amino-acid biosynthesis; L-isoleucine biosynthesis; L-isoleucine from 2-oxobutanoate: step 1/4. Its pathway is amino-acid biosynthesis; L-valine biosynthesis; L-valine from pyruvate: step 1/4. The protein is Acetolactate synthase small subunit (ilvH) of Mycobacterium bovis (strain ATCC BAA-935 / AF2122/97).